A 253-amino-acid polypeptide reads, in one-letter code: Polyhedrin (253 aa).

Major component of the virus occlusion bodies, which are large proteinaceous structures (polyhedra), that protect the virus from the outside environment for extended periods until they are ingested by insect larvae. The protein is Polyhedrin of Orgyia pseudotsugata cypovirus (OpCPV).